A 995-amino-acid polypeptide reads, in one-letter code: Protein translocase subunit SecA (995 aa).

Residues Gln-86, 104–108 (GEGKT), and Asp-535 each bind ATP. Residues 883–911 (AQTVSSDGNGEVVRKPQRRSTPQIGRNEL) form a disordered region. Positions 912, 914, 923, and 924 each coordinate Zn(2+). The disordered stretch occupies residues 939 to 995 (PSAPPASKALKSTPATQTAVAEEAAKIQAAINSGKLPPTQTTPRGRQAPSVPRGKKR). Residues 957–969 (AVAEEAAKIQAAI) are compositionally biased toward low complexity.

The protein belongs to the SecA family. In terms of assembly, monomer and homodimer. Part of the essential Sec protein translocation apparatus which comprises SecA, SecYEG and auxiliary proteins SecDF. Other proteins may also be involved. It depends on Zn(2+) as a cofactor.

The protein localises to the cell membrane. Its subcellular location is the cytoplasm. The catalysed reaction is ATP + H2O + cellular proteinSide 1 = ADP + phosphate + cellular proteinSide 2.. Part of the Sec protein translocase complex. Interacts with the SecYEG preprotein conducting channel. Has a central role in coupling the hydrolysis of ATP to the transfer of proteins into and across the cell membrane, serving as an ATP-driven molecular motor driving the stepwise translocation of polypeptide chains across the membrane. This is Protein translocase subunit SecA from Chloroflexus aurantiacus (strain ATCC 29366 / DSM 635 / J-10-fl).